The primary structure comprises 158 residues: Snaclec crotocetin-1 (158 aa).

The N-terminal stretch at 1 to 23 (MGRFIFVSFGLLVVFLSLSGTGA) is a signal peptide. 3 cysteine pairs are disulfide-bonded: Cys-27–Cys-38, Cys-55–Cys-152, and Cys-127–Cys-144. Residues 34-153 (YDQYCYRVIK…CEEKNLFVCK (120 aa)) enclose the C-type lectin domain.

Belongs to the snaclec family. In terms of assembly, heterodimer; disulfide-linked. Expressed by the venom gland.

It localises to the secreted. Functionally, interferes with one step of hemostasis (modulation of platelet aggregation, or coagulation cascade, for example). This is Snaclec crotocetin-1 from Crotalus durissus terrificus (South American rattlesnake).